A 369-amino-acid polypeptide reads, in one-letter code: Probable dual-specificity RNA methyltransferase RlmN (369 aa).

The active-site Proton acceptor is the Glu-108. The region spanning 114 to 351 (YPDRATLCIS…LAQGVSCTVR (238 aa)) is the Radical SAM core domain. Cys-121 and Cys-362 are disulfide-bonded. [4Fe-4S] cluster contacts are provided by Cys-128, Cys-132, and Cys-135. Residues 183–184 (GE), Ser-217, 240–242 (SLH), and Asn-319 each bind S-adenosyl-L-methionine. The active-site S-methylcysteine intermediate is the Cys-362.

It belongs to the radical SAM superfamily. RlmN family. It depends on [4Fe-4S] cluster as a cofactor.

It localises to the cytoplasm. It catalyses the reaction adenosine(2503) in 23S rRNA + 2 reduced [2Fe-2S]-[ferredoxin] + 2 S-adenosyl-L-methionine = 2-methyladenosine(2503) in 23S rRNA + 5'-deoxyadenosine + L-methionine + 2 oxidized [2Fe-2S]-[ferredoxin] + S-adenosyl-L-homocysteine. The enzyme catalyses adenosine(37) in tRNA + 2 reduced [2Fe-2S]-[ferredoxin] + 2 S-adenosyl-L-methionine = 2-methyladenosine(37) in tRNA + 5'-deoxyadenosine + L-methionine + 2 oxidized [2Fe-2S]-[ferredoxin] + S-adenosyl-L-homocysteine. Its function is as follows. Specifically methylates position 2 of adenine 2503 in 23S rRNA and position 2 of adenine 37 in tRNAs. The sequence is that of Probable dual-specificity RNA methyltransferase RlmN from Rhodococcus opacus (strain B4).